The following is a 354-amino-acid chain: Membrane progestin receptor beta (354 aa).

Residues 1–75 (MTTAILERLS…FFSLFQKHNE (75 aa)) are Cytoplasmic-facing. Residues 76–96 (VVNVWTHLLAALAVLLRFWAF) traverse the membrane as a helical segment. Residues 97-111 (AEAEALPWASTHSLP) are Extracellular-facing. The helical transmembrane segment at 112–132 (LLLFILSSITYLTCSLLAHLL) threads the bilayer. The Cytoplasmic segment spans residues 133-174 (QSKSELSHYTFYFVDYVGVSVYQYGSALAHFFYSSDQAWYDR). The helical transmembrane segment at 175–195 (FWLFFLPAAAFCGWLSCAGCC) threads the bilayer. The Extracellular portion of the chain corresponds to 196–213 (YAKYRYRRPYPVMRKICQ). The helical transmembrane segment at 214-234 (VVPAGLAFILDISPVAHRVAL) threads the bilayer. Residues 235 to 243 (CHLAGCQEQ) are Cytoplasmic-facing. The chain crosses the membrane as a helical span at residues 244–264 (AAWYHTLQILFFLVSAYFFSC). Topologically, residues 265-283 (PVPEKYFPGSCDIVGHGHQ) are extracellular. The helical transmembrane segment at 284-304 (IFHAFLSICTLSQLEAILLDY) threads the bilayer. Residues 305 to 319 (QGRQEIFLQRHGPLS) are Cytoplasmic-facing. A helical transmembrane segment spans residues 320-340 (VHMACLSFFFLAACSAATAAL). At 341 to 354 (LRHKVKARLTKKDS) the chain is on the extracellular side.

The protein belongs to the ADIPOR family. In terms of tissue distribution, highly expressed in the hypothalamus. Also expressed in spinal cord, kidney and testis.

It is found in the cell membrane. In terms of biological role, plasma membrane progesterone (P4) receptor coupled to G proteins. Seems to act through a G(i) mediated pathway. May be involved in oocyte maturation. Also binds dehydroepiandrosterone (DHEA), pregnanolone, pregnenolone and allopregnanolone. The sequence is that of Membrane progestin receptor beta from Homo sapiens (Human).